A 181-amino-acid polypeptide reads, in one-letter code: MVDLDEFEVVLEELVKEVKRRDTIAAVLISTSFVLFGFLALVLLNVIRLEEFMRGIVAIVSLIAIWVLMTAGVYILLSMPLPELPTRIVADSKGVMELMKRNYGGKIYITRQSYRNLPPKVGARMNLEIVDVSDEEVAKYLNHGVELAESIAAAKKLKAKVVSDRKMKVDGVEIIKAEDLF.

Transmembrane regions (helical) follow at residues 24–46 (IAAVLISTSFVLFGFLALVLLNV) and 55–77 (GIVAIVSLIAIWVLMTAGVYILL).

Its subcellular location is the cell membrane. This is an uncharacterized protein from Archaeoglobus fulgidus (strain ATCC 49558 / DSM 4304 / JCM 9628 / NBRC 100126 / VC-16).